Reading from the N-terminus, the 274-residue chain is Large ribosomal subunit protein uL2cz/uL2cy (274 aa).

Disordered stretches follow at residues 1–23 and 223–274; these read MAIHLYKTSTPSTRNGTVGSQVK and MNPV…RRSK. Residues 7-23 show a composition bias toward polar residues; it reads KTSTPSTRNGTVGSQVK.

This sequence belongs to the universal ribosomal protein uL2 family. As to quaternary structure, part of the 50S ribosomal subunit.

Its subcellular location is the plastid. The protein localises to the chloroplast. The sequence is that of Large ribosomal subunit protein uL2cz/uL2cy (rpl2-A) from Nandina domestica (Heavenly bamboo).